Consider the following 1206-residue polypeptide: uncharacterized protein (1206 aa).

3 disordered regions span residues 133–547 (YDLD…PVDY), 568–837 (FASS…DQLL), and 859–1206 (RQRA…KATS). Pro residues-rich tracts occupy residues 139–151 (IPPP…PGPP) and 159–234 (GESP…PPAP). Residue S255 is modified to Phosphoserine. The span at 305–319 (VRTSSIPVQEAPGAS) shows a compositional bias: low complexity. Positions 351-363 (RALEPEQPREPRP) are enriched in basic and acidic residues. Positions 384–413 (APPPAPPLPPPAPPLPPPAPSLPPAAPPLP) are enriched in pro residues. Over residues 414 to 436 (STELAAPPSSGFMKTSKSNSPAL) the composition is skewed to low complexity. Over residues 454-467 (VDWRDPRQMEKLRS) the composition is skewed to basic and acidic residues. Over residues 522–531 (PEKSPSSSSL) the composition is skewed to low complexity. Positions 568–577 (FASSAEKEAK) are enriched in basic and acidic residues. Positions 656-671 (LPKATPGLTLPLKPTP) are enriched in low complexity. T680 is modified (phosphothreonine). Positions 732-747 (AEKDLASVRQREKPET) are enriched in basic and acidic residues. The span at 1001–1016 (IPPPPEFSNDPEPPAP) shows a compositional bias: pro residues. Residues 1028-1041 (PRNNFSDLGQSWGP) show a composition bias toward polar residues. Residues R1051, R1083, and R1094 each carry the omega-N-methylarginine modification. A compositionally biased stretch (polar residues) spans 1170–1184 (PHGNTHYGSPINTFT).

This is an uncharacterized protein from Mus musculus (Mouse).